A 265-amino-acid chain; its full sequence is Undecaprenyl-diphosphatase (265 aa).

8 helical membrane-spanning segments follow: residues 7 to 27, 45 to 65, 86 to 106, 108 to 128, 145 to 165, 186 to 206, 214 to 234, and 245 to 265; these read VIVS…PISS, TKIL…YFFH, LHIL…YKKI, LLFN…FLLI, ISLL…YPGF, IEFS…YDFI, ILDL…SILC, and TSLI…YFIN.

This sequence belongs to the UppP family.

The protein localises to the cell membrane. The catalysed reaction is di-trans,octa-cis-undecaprenyl diphosphate + H2O = di-trans,octa-cis-undecaprenyl phosphate + phosphate + H(+). Its function is as follows. Catalyzes the dephosphorylation of undecaprenyl diphosphate (UPP). Confers resistance to bacitracin. The polypeptide is Undecaprenyl-diphosphatase (Buchnera aphidicola subsp. Acyrthosiphon pisum (strain 5A)).